We begin with the raw amino-acid sequence, 269 residues long: MSRIADTFAELQSKGRKALIPYVTAGFPFVDITPALMHGMVEAGADVIELGVPFSDPMADGPVIQKAGEKALALGVGLAQVLEMVRSFRLRNSTTPVVLMGYANPVERYEQRHGKGAFARDAGEAGVDGVLIVDYPPEECEQFAADLRGHGIDLIFLLAPTSTAERMQQVARVASGYVYYVSLKGVTGSGALDTAAVEAMLPRIREHVKIPVGVGFGIRDAATAQAIGRVADAVVIGSRIIQLIEDQPHEKVVGITVDFLRGVRKALDA.

Active-site proton acceptor residues include Glu49 and Asp60.

This sequence belongs to the TrpA family. In terms of assembly, tetramer of two alpha and two beta chains.

It catalyses the reaction (1S,2R)-1-C-(indol-3-yl)glycerol 3-phosphate + L-serine = D-glyceraldehyde 3-phosphate + L-tryptophan + H2O. It participates in amino-acid biosynthesis; L-tryptophan biosynthesis; L-tryptophan from chorismate: step 5/5. Functionally, the alpha subunit is responsible for the aldol cleavage of indoleglycerol phosphate to indole and glyceraldehyde 3-phosphate. This Acidovorax ebreus (strain TPSY) (Diaphorobacter sp. (strain TPSY)) protein is Tryptophan synthase alpha chain.